We begin with the raw amino-acid sequence, 199 residues long: LIM domain-containing protein WLIM2b (199 aa).

2 LIM zinc-binding domains span residues 8 to 68 (QKCK…LFKE) and 106 to 166 (EKCA…LFKE).

As to quaternary structure, interacts with F-actin. As to expression, expressed in roots, leaves, stems, flowers and siliques. Barely detected in pollen.

Its subcellular location is the cytoplasm. The protein resides in the cytoskeleton. In terms of biological role, binds to actin filaments and promotes cross-linking into thick bundles. Has an actin-stabilizing activity. The actin regulatory activities are not regulated by pH and [Ca(2+)]. In Arabidopsis thaliana (Mouse-ear cress), this protein is LIM domain-containing protein WLIM2b.